Reading from the N-terminus, the 114-residue chain is Phosphoribosyl-ATP pyrophosphatase (114 aa).

It belongs to the PRA-PH family.

The protein localises to the cytoplasm. It catalyses the reaction 1-(5-phospho-beta-D-ribosyl)-ATP + H2O = 1-(5-phospho-beta-D-ribosyl)-5'-AMP + diphosphate + H(+). It participates in amino-acid biosynthesis; L-histidine biosynthesis; L-histidine from 5-phospho-alpha-D-ribose 1-diphosphate: step 2/9. This is Phosphoribosyl-ATP pyrophosphatase from Leuconostoc mesenteroides subsp. mesenteroides (strain ATCC 8293 / DSM 20343 / BCRC 11652 / CCM 1803 / JCM 6124 / NCDO 523 / NBRC 100496 / NCIMB 8023 / NCTC 12954 / NRRL B-1118 / 37Y).